The sequence spans 368 residues: tRNA-specific 2-thiouridylase MnmA (368 aa).

ATP-binding positions include 12 to 19 (GMSGGVDS) and methionine 38. Positions 98-100 (NPD) are interaction with target base in tRNA. The Nucleophile role is filled by cysteine 103. An intrachain disulfide couples cysteine 103 to cysteine 200. Position 128 (glycine 128) interacts with ATP. An interaction with tRNA region spans residues 150-152 (KDQ). Catalysis depends on cysteine 200, which acts as the Cysteine persulfide intermediate. The interval 313 to 314 (RY) is interaction with tRNA.

It belongs to the MnmA/TRMU family. Interacts with TusE.

Its subcellular location is the cytoplasm. The enzyme catalyses S-sulfanyl-L-cysteinyl-[protein] + uridine(34) in tRNA + AH2 + ATP = 2-thiouridine(34) in tRNA + L-cysteinyl-[protein] + A + AMP + diphosphate + H(+). In terms of biological role, catalyzes the 2-thiolation of uridine at the wobble position (U34) of tRNA(Lys), tRNA(Glu) and tRNA(Gln), leading to the formation of s(2)U34, the first step of tRNA-mnm(5)s(2)U34 synthesis. Sulfur is provided by IscS, via a sulfur-relay system. Binds ATP and its substrate tRNAs. The sequence is that of tRNA-specific 2-thiouridylase MnmA from Pectobacterium atrosepticum (strain SCRI 1043 / ATCC BAA-672) (Erwinia carotovora subsp. atroseptica).